A 499-amino-acid polypeptide reads, in one-letter code: NADH-quinone oxidoreductase subunit N (499 aa).

Helical transmembrane passes span 16 to 36 (AAFSMSVVGGVGLAMIVLDAF), 42 to 62 (AIPWLGVAALGVSAVWEITHL), 77 to 97 (GGFVAFINLIILLTGLATILL), 109 to 129 (YGEVYALIMFCTVGMIMLGSA), 133 to 153 (VSIFLGLETMSVCLYVLTGFI), 167 to 187 (FLLGAFSTGFFLYGIALMYGA), 208 to 228 (LLFWGGFALFLVGFFFKVSAA), 252 to 272 (ATKAAAFAALILVLVHAVPGG), 274 to 294 (WQLSVAAVAVLTMVIGNVMAL), 302 to 322 (LLAYSSIAHAGYLLVGLSAGT), 327 to 347 (AGALFYLLVYAVMNIGAFGVM), 376 to 396 (GSTMGVFMLSLIGFPPLGGFI), 411 to 433 (TWLVVIGVLMSALSAYYYLRVVY), and 463 to 483 (GTLVVCAVALVVLGVFFGGVL).

This sequence belongs to the complex I subunit 2 family. As to quaternary structure, NDH-1 is composed of 14 different subunits. Subunits NuoA, H, J, K, L, M, N constitute the membrane sector of the complex.

It is found in the cell inner membrane. The catalysed reaction is a quinone + NADH + 5 H(+)(in) = a quinol + NAD(+) + 4 H(+)(out). NDH-1 shuttles electrons from NADH, via FMN and iron-sulfur (Fe-S) centers, to quinones in the respiratory chain. The immediate electron acceptor for the enzyme in this species is believed to be a menaquinone. Couples the redox reaction to proton translocation (for every two electrons transferred, four hydrogen ions are translocated across the cytoplasmic membrane), and thus conserves the redox energy in a proton gradient. This Salinibacter ruber (strain DSM 13855 / M31) protein is NADH-quinone oxidoreductase subunit N.